A 262-amino-acid polypeptide reads, in one-letter code: uncharacterized protein (262 aa).

The next 7 membrane-spanning stretches (helical) occupy residues 42 to 62 (IAKF…TVLN), 71 to 91 (IINI…LLYF), 115 to 135 (IGLA…MELI), 145 to 165 (VVSY…CCFN), 185 to 205 (LWAY…YSNH), 206 to 226 (PLMI…PFMI), and 235 to 255 (AYPS…NYAI).

It localises to the membrane. This is an uncharacterized protein from Acanthamoeba polyphaga mimivirus (APMV).